The chain runs to 656 residues: DNA ligase (656 aa).

NAD(+)-binding positions include 32 to 36 (DAIYD) and 81 to 82 (SL). Lysine 112 acts as the N6-AMP-lysine intermediate in catalysis. 3 residues coordinate NAD(+): arginine 133, glutamate 167, and lysine 306. Residues cysteine 400, cysteine 403, cysteine 416, and cysteine 421 each contribute to the Zn(2+) site. The BRCT domain maps to 577–656 (KSSSVFNNKT…ELLKRLKELD (80 aa)).

It belongs to the NAD-dependent DNA ligase family. LigA subfamily. It depends on Mg(2+) as a cofactor. Requires Mn(2+) as cofactor.

It catalyses the reaction NAD(+) + (deoxyribonucleotide)n-3'-hydroxyl + 5'-phospho-(deoxyribonucleotide)m = (deoxyribonucleotide)n+m + AMP + beta-nicotinamide D-nucleotide.. DNA ligase that catalyzes the formation of phosphodiester linkages between 5'-phosphoryl and 3'-hydroxyl groups in double-stranded DNA using NAD as a coenzyme and as the energy source for the reaction. It is essential for DNA replication and repair of damaged DNA. This is DNA ligase from Helicobacter pylori (strain ATCC 700392 / 26695) (Campylobacter pylori).